The following is a 172-amino-acid chain: Translocon-associated protein subunit delta (172 aa).

The N-terminal stretch at Met1 to Ala24 is a signal peptide. Cys25 and Cys56 are oxidised to a cystine. Residues Cys25–Gly143 lie on the Lumenal side of the membrane. Residue Lys72 forms a Glycyl lysine isopeptide (Lys-Gly) (interchain with G-Cter in ubiquitin) linkage. Residues Pro144 to Phe164 traverse the membrane as a helical segment. The Cytoplasmic portion of the chain corresponds to Ser165–Ala172.

The protein belongs to the TRAP-delta family. Heterotetramer of TRAP-alpha, TRAP-beta, TRAP-delta and TRAP-gamma.

The protein resides in the endoplasmic reticulum membrane. Its function is as follows. TRAP proteins are part of a complex whose function is to bind calcium to the ER membrane and thereby regulate the retention of ER resident proteins. The protein is Translocon-associated protein subunit delta (SSR4) of Bos taurus (Bovine).